A 1215-amino-acid polypeptide reads, in one-letter code: DNA-directed RNA polymerase subunit beta' (1215 aa).

The Zn(2+) site is built by Cys60, Cys62, Cys75, and Cys78. Asp450, Asp452, and Asp454 together coordinate Mg(2+). Zn(2+) is bound by residues Cys819, Cys893, Cys900, and Cys903.

Belongs to the RNA polymerase beta' chain family. As to quaternary structure, the RNAP catalytic core consists of 2 alpha, 1 beta, 1 beta' and 1 omega subunit. When a sigma factor is associated with the core the holoenzyme is formed, which can initiate transcription. The cofactor is Mg(2+). Zn(2+) is required as a cofactor.

It carries out the reaction RNA(n) + a ribonucleoside 5'-triphosphate = RNA(n+1) + diphosphate. Its function is as follows. DNA-dependent RNA polymerase catalyzes the transcription of DNA into RNA using the four ribonucleoside triphosphates as substrates. The protein is DNA-directed RNA polymerase subunit beta' of Levilactobacillus brevis (strain ATCC 367 / BCRC 12310 / CIP 105137 / JCM 1170 / LMG 11437 / NCIMB 947 / NCTC 947) (Lactobacillus brevis).